A 285-amino-acid polypeptide reads, in one-letter code: GTP cyclohydrolase 1 type 2 homolog (285 aa).

A divalent metal cation is bound by residues His65, His66, Asp104, His230, and Glu234.

It belongs to the GTP cyclohydrolase I type 2/NIF3 family. As to quaternary structure, homohexamer.

The protein is GTP cyclohydrolase 1 type 2 homolog of Streptomyces coelicolor (strain ATCC BAA-471 / A3(2) / M145).